A 446-amino-acid polypeptide reads, in one-letter code: Histidine--tRNA ligase (446 aa).

It belongs to the class-II aminoacyl-tRNA synthetase family. Homodimer.

It is found in the cytoplasm. It carries out the reaction tRNA(His) + L-histidine + ATP = L-histidyl-tRNA(His) + AMP + diphosphate + H(+). This is Histidine--tRNA ligase from Paraburkholderia phytofirmans (strain DSM 17436 / LMG 22146 / PsJN) (Burkholderia phytofirmans).